The following is a 407-amino-acid chain: 12S rRNA N(4)-cytidine methyltransferase METTL15 (407 aa).

Positions 44 to 63 (EAQEETDQTGIQELHRSQDR) are disordered. Residues 100–102 (GGH), D119, F146, D169, and Q176 each bind S-adenosyl-L-methionine. The residue at position 358 (S358) is a Phosphoserine. The tract at residues 386–407 (EDEDVQDNPRGRSAKLRAAIKL) is disordered. Basic residues predominate over residues 397–407 (RSAKLRAAIKL).

It belongs to the methyltransferase superfamily. RsmH family.

The protein localises to the mitochondrion matrix. It catalyses the reaction cytidine(839) in 12S rRNA + S-adenosyl-L-methionine = N(4)-methylcytidine(839) in 12S rRNA + S-adenosyl-L-homocysteine + H(+). Its function is as follows. N4-methylcytidine (m4C) methyltransferase responsible for the methylation of position C839 in mitochondrial 12S rRNA. Involved in the stabilization of 12S rRNA folding, therefore facilitating the assembly of the mitochondrial small ribosomal subunits. The polypeptide is 12S rRNA N(4)-cytidine methyltransferase METTL15 (METTL15) (Bos taurus (Bovine)).